Reading from the N-terminus, the 762-residue chain is 5-methyltetrahydropteroyltriglutamate--homocysteine methyltransferase (762 aa).

5-methyltetrahydropteroyltri-L-glutamate-binding positions include 17–20 (REWK) and lysine 111. Residues 435–437 (IGS) and glutamate 488 contribute to the L-homocysteine site. L-methionine-binding positions include 435 to 437 (IGS) and glutamate 488. Residues 519 to 520 (RC) and tryptophan 565 contribute to the 5-methyltetrahydropteroyltri-L-glutamate site. Aspartate 603 is a binding site for L-homocysteine. Residue aspartate 603 participates in L-methionine binding. Glutamate 609 contacts 5-methyltetrahydropteroyltri-L-glutamate. Histidine 645, cysteine 647, and glutamate 669 together coordinate Zn(2+). The active-site Proton donor is the histidine 698. Residue cysteine 730 participates in Zn(2+) binding.

It belongs to the vitamin-B12 independent methionine synthase family. Zn(2+) is required as a cofactor.

It carries out the reaction 5-methyltetrahydropteroyltri-L-glutamate + L-homocysteine = tetrahydropteroyltri-L-glutamate + L-methionine. It functions in the pathway amino-acid biosynthesis; L-methionine biosynthesis via de novo pathway; L-methionine from L-homocysteine (MetE route): step 1/1. Its function is as follows. Catalyzes the transfer of a methyl group from 5-methyltetrahydrofolate to homocysteine resulting in methionine formation. This chain is 5-methyltetrahydropteroyltriglutamate--homocysteine methyltransferase, found in Bacillus anthracis (strain CDC 684 / NRRL 3495).